A 347-amino-acid chain; its full sequence is Tyrosine recombinase XerC 2 (347 aa).

Residues 17-108 (LVLTRYMEAH…PLKTWFKWLA (92 aa)) form the Core-binding (CB) domain. Residues 125–313 (KLPKHLPRAI…SIEHLRAIHD (189 aa)) form the Tyr recombinase domain. Active-site residues include R170, K195, H265, R268, and H291. Y300 (O-(3'-phospho-DNA)-tyrosine intermediate) is an active-site residue.

Belongs to the 'phage' integrase family.

The protein resides in the cytoplasm. Its function is as follows. Site-specific tyrosine recombinase, which acts by catalyzing the cutting and rejoining of the recombining DNA molecules. The chain is Tyrosine recombinase XerC 2 from Ralstonia nicotianae (strain ATCC BAA-1114 / GMI1000) (Ralstonia solanacearum).